The chain runs to 201 residues: 3-isopropylmalate dehydratase small subunit (201 aa).

It belongs to the LeuD family. LeuD type 1 subfamily. Heterodimer of LeuC and LeuD.

The enzyme catalyses (2R,3S)-3-isopropylmalate = (2S)-2-isopropylmalate. It functions in the pathway amino-acid biosynthesis; L-leucine biosynthesis; L-leucine from 3-methyl-2-oxobutanoate: step 2/4. Its function is as follows. Catalyzes the isomerization between 2-isopropylmalate and 3-isopropylmalate, via the formation of 2-isopropylmaleate. The polypeptide is 3-isopropylmalate dehydratase small subunit (Brucella anthropi (strain ATCC 49188 / DSM 6882 / CCUG 24695 / JCM 21032 / LMG 3331 / NBRC 15819 / NCTC 12168 / Alc 37) (Ochrobactrum anthropi)).